We begin with the raw amino-acid sequence, 620 residues long: Chaperone protein HscA homolog (620 aa).

This sequence belongs to the heat shock protein 70 family.

Functionally, chaperone involved in the maturation of iron-sulfur cluster-containing proteins. Has a low intrinsic ATPase activity which is markedly stimulated by HscB. In Pseudomonas syringae pv. syringae (strain B728a), this protein is Chaperone protein HscA homolog.